The chain runs to 158 residues: 6,7-dimethyl-8-ribityllumazine synthase (158 aa).

5-amino-6-(D-ribitylamino)uracil-binding positions include phenylalanine 22, 57-59, and 84-86; these read AYE and TVI. Position 89–90 (89–90) interacts with (2S)-2-hydroxy-3-oxobutyl phosphate; the sequence is GT. The active-site Proton donor is the histidine 92. Phenylalanine 117 is a 5-amino-6-(D-ribitylamino)uracil binding site. (2S)-2-hydroxy-3-oxobutyl phosphate is bound at residue arginine 131.

It belongs to the DMRL synthase family. In terms of assembly, forms an icosahedral capsid composed of 60 subunits, arranged as a dodecamer of pentamers.

It catalyses the reaction (2S)-2-hydroxy-3-oxobutyl phosphate + 5-amino-6-(D-ribitylamino)uracil = 6,7-dimethyl-8-(1-D-ribityl)lumazine + phosphate + 2 H2O + H(+). It participates in cofactor biosynthesis; riboflavin biosynthesis; riboflavin from 2-hydroxy-3-oxobutyl phosphate and 5-amino-6-(D-ribitylamino)uracil: step 1/2. In terms of biological role, catalyzes the formation of 6,7-dimethyl-8-ribityllumazine by condensation of 5-amino-6-(D-ribitylamino)uracil with 3,4-dihydroxy-2-butanone 4-phosphate. This is the penultimate step in the biosynthesis of riboflavin. This is 6,7-dimethyl-8-ribityllumazine synthase from Pectobacterium carotovorum subsp. carotovorum (strain PC1).